Reading from the N-terminus, the 248-residue chain is Type III pantothenate kinase (248 aa).

ATP is bound at residue 6–13 (DCGNSFIK). Substrate-binding positions include tyrosine 92 and 99 to 102 (GLDR). Aspartate 101 acts as the Proton acceptor in catalysis. Aspartate 121 provides a ligand contact to K(+). Residue threonine 124 coordinates ATP. Threonine 180 contributes to the substrate binding site.

This sequence belongs to the type III pantothenate kinase family. Homodimer. It depends on NH4(+) as a cofactor. K(+) is required as a cofactor.

The protein localises to the cytoplasm. It carries out the reaction (R)-pantothenate + ATP = (R)-4'-phosphopantothenate + ADP + H(+). Its pathway is cofactor biosynthesis; coenzyme A biosynthesis; CoA from (R)-pantothenate: step 1/5. Its function is as follows. Catalyzes the phosphorylation of pantothenate (Pan), the first step in CoA biosynthesis. This Ectopseudomonas mendocina (strain ymp) (Pseudomonas mendocina) protein is Type III pantothenate kinase.